The following is a 318-amino-acid chain: Ubiquitin-like domain-containing CTD phosphatase 1 (318 aa).

The Ubiquitin-like domain occupies 3–81; that stretch reads LSLIIKWGGQ…IMMMGTREES (79 aa). Residues 133–294 form the FCP1 homology domain; it reads PREGKKLLVL…LKLTQYLKEI (162 aa). Mg(2+) is bound by residues D143, D145, and D253.

Requires Mg(2+) as cofactor.

It localises to the nucleus. It carries out the reaction O-phospho-L-seryl-[protein] + H2O = L-seryl-[protein] + phosphate. The enzyme catalyses O-phospho-L-threonyl-[protein] + H2O = L-threonyl-[protein] + phosphate. Its function is as follows. Dephosphorylates 26S nuclear proteasomes, thereby decreasing their proteolytic activity. Recruited to the 19S regulatory particle of the 26S proteasome where it dephosphorylates 19S component PSMC2 which impairs PSMC2 ATPase activity and disrupts 26S proteasome assembly. Has also been reported to stimulate the proteolytic activity of the 26S proteasome. The sequence is that of Ubiquitin-like domain-containing CTD phosphatase 1 (UBLCP1) from Gallus gallus (Chicken).